Consider the following 117-residue polypeptide: Immunoglobulin heavy variable 1-69-2 (117 aa).

The first 19 residues, 1–19, serve as a signal peptide directing secretion; the sequence is MDCTWRILLLVAAATGTHA. The framework-1 stretch occupies residues 20 to 44; the sequence is EVQLVQSGAEVKKPGATVKISCKVS. The region spanning 20-117 is the Ig-like domain; the sequence is EVQLVQSGAE…EDTAVYYCAT (98 aa). Cys-41 and Cys-115 are joined by a disulfide. The complementarity-determining-1 stretch occupies residues 45–52; the sequence is GYTFTDYY. The segment at 53–69 is framework-2; it reads MHWVQQAPGKGLEWMGL. The tract at residues 70 to 77 is complementarity-determining-2; that stretch reads VDPEDGET. A framework-3 region spans residues 78 to 115; it reads IYAEKFQGRVTITADTSTDTAYMELSSLRSEDTAVYYC. Residues 116–117 are complementarity-determining-3; sequence AT.

Immunoglobulins are composed of two identical heavy chains and two identical light chains; disulfide-linked.

It is found in the secreted. The protein resides in the cell membrane. Its function is as follows. V region of the variable domain of immunoglobulin heavy chains that participates in the antigen recognition. Immunoglobulins, also known as antibodies, are membrane-bound or secreted glycoproteins produced by B lymphocytes. In the recognition phase of humoral immunity, the membrane-bound immunoglobulins serve as receptors which, upon binding of a specific antigen, trigger the clonal expansion and differentiation of B lymphocytes into immunoglobulins-secreting plasma cells. Secreted immunoglobulins mediate the effector phase of humoral immunity, which results in the elimination of bound antigens. The antigen binding site is formed by the variable domain of one heavy chain, together with that of its associated light chain. Thus, each immunoglobulin has two antigen binding sites with remarkable affinity for a particular antigen. The variable domains are assembled by a process called V-(D)-J rearrangement and can then be subjected to somatic hypermutations which, after exposure to antigen and selection, allow affinity maturation for a particular antigen. The sequence is that of Immunoglobulin heavy variable 1-69-2 from Homo sapiens (Human).